Here is a 419-residue protein sequence, read N- to C-terminus: Enolase (419 aa).

Residue Q160 participates in (2R)-2-phosphoglycerate binding. The Proton donor role is filled by E204. D240, E283, and D309 together coordinate Mg(2+). 4 residues coordinate (2R)-2-phosphoglycerate: K334, R363, S364, and K385. K334 acts as the Proton acceptor in catalysis.

It belongs to the enolase family. Mg(2+) serves as cofactor.

It is found in the cytoplasm. The protein resides in the secreted. The protein localises to the cell surface. It catalyses the reaction (2R)-2-phosphoglycerate = phosphoenolpyruvate + H2O. It functions in the pathway carbohydrate degradation; glycolysis; pyruvate from D-glyceraldehyde 3-phosphate: step 4/5. Catalyzes the reversible conversion of 2-phosphoglycerate (2-PG) into phosphoenolpyruvate (PEP). It is essential for the degradation of carbohydrates via glycolysis. The polypeptide is Enolase (Pyrobaculum aerophilum (strain ATCC 51768 / DSM 7523 / JCM 9630 / CIP 104966 / NBRC 100827 / IM2)).